The following is a 366-amino-acid chain: MREETPEQPAPLRSGYTTGSCATATSLAAARLLLGGTISDAVQIVLPKGQQVLMRLEFCRAWENGAEAGTLKDAGDDPDVTHGALVFARVRLSAEPGVRFHAGPGVGTVTRPGLTLAVGEPAINPVPRQMIERHLAQLAAERGYAGGFEVAIGVEGGAELALKTMNPRLGILGGLSILGTSGIVRPFSCSAYIASIHQGIDVARANGVRHIAACTGNASEDAMRRRYALPEIALIEMGDFAGAVLKHLRRAPVEKLSLCGGFGKISKLAGGHLDLHSRHSSIDLPQLAGWAAALGASTALQDSMRAANTSQQALAQAHAEGVALGDAVCAHALRFARGIVPTEVALEVFAIDRQGNLVGQACEERR.

The protein belongs to the CbiD family.

It carries out the reaction Co-precorrin-5B + S-adenosyl-L-methionine = Co-precorrin-6A + S-adenosyl-L-homocysteine. It functions in the pathway cofactor biosynthesis; adenosylcobalamin biosynthesis; cob(II)yrinate a,c-diamide from sirohydrochlorin (anaerobic route): step 6/10. Its function is as follows. Catalyzes the methylation of C-1 in cobalt-precorrin-5B to form cobalt-precorrin-6A. This is Cobalt-precorrin-5B C(1)-methyltransferase from Pseudomonas aeruginosa (strain LESB58).